Here is a 626-residue protein sequence, read N- to C-terminus: Threonine--tRNA ligase (626 aa).

An editing domain region spans residues 1-144 (MRMLLIHADY…LSRTIVPEEG (144 aa)). The catalytic stretch occupies residues 207–506 (PHVRLMLEHE…QAQGKKPMFP (300 aa)). Residues Cys-299, His-351, and His-475 each coordinate Zn(2+).

It belongs to the class-II aminoacyl-tRNA synthetase family. As to quaternary structure, homodimer. The cofactor is Zn(2+).

It is found in the cytoplasm. It catalyses the reaction tRNA(Thr) + L-threonine + ATP = L-threonyl-tRNA(Thr) + AMP + diphosphate + H(+). In terms of biological role, catalyzes the attachment of threonine to tRNA(Thr) in a two-step reaction: L-threonine is first activated by ATP to form Thr-AMP and then transferred to the acceptor end of tRNA(Thr). Also edits incorrectly charged L-seryl-tRNA(Thr). The sequence is that of Threonine--tRNA ligase from Thermococcus gammatolerans (strain DSM 15229 / JCM 11827 / EJ3).